Consider the following 241-residue polypeptide: Peroxisomal membrane protein 11C (241 aa).

Over 1-124 (MASLSGLASA…ARVLHVDSSR (124 aa)) the chain is Cytoplasmic. The helical transmembrane segment at 125 to 149 (WWTLSTTLWALSLLLGVARSLWMLL) threads the bilayer. At 150–211 (KLRQRLRSPT…GVLWAGRFPP (62 aa)) the chain is on the lumenal side. Residues 212–227 (WLVGLMGTISSILSMY) traverse the membrane as a helical segment. At 228-241 (QAARAGGQAEATTP) the chain is on the cytoplasmic side.

Belongs to the peroxin-11 family. In terms of assembly, homodimer. Heterodimer with either PEX11A or PEX11B. Interacts with FIS1.

It is found in the peroxisome membrane. Its function is as follows. Promotes membrane protrusion and elongation on the peroxisomal surface. In Homo sapiens (Human), this protein is Peroxisomal membrane protein 11C (PEX11G).